A 434-amino-acid chain; its full sequence is Trigger factor (434 aa).

Positions 163–248 constitute a PPIase FKBP-type domain; that stretch reads GDTAVIDFAG…VHDIKRKELP (86 aa).

The protein belongs to the FKBP-type PPIase family. Tig subfamily.

The protein localises to the cytoplasm. It carries out the reaction [protein]-peptidylproline (omega=180) = [protein]-peptidylproline (omega=0). Its function is as follows. Involved in protein export. Acts as a chaperone by maintaining the newly synthesized protein in an open conformation. Functions as a peptidyl-prolyl cis-trans isomerase. The protein is Trigger factor of Shouchella clausii (strain KSM-K16) (Alkalihalobacillus clausii).